The sequence spans 125 residues: Small ribosomal subunit protein uS13 (125 aa).

Residues 93–125 (RRGLPVRGQRTKTNARTRKGPKRTVAGKKKAGR) are disordered.

It belongs to the universal ribosomal protein uS13 family. As to quaternary structure, part of the 30S ribosomal subunit. Forms a loose heterodimer with protein S19. Forms two bridges to the 50S subunit in the 70S ribosome.

Its function is as follows. Located at the top of the head of the 30S subunit, it contacts several helices of the 16S rRNA. In the 70S ribosome it contacts the 23S rRNA (bridge B1a) and protein L5 of the 50S subunit (bridge B1b), connecting the 2 subunits; these bridges are implicated in subunit movement. Contacts the tRNAs in the A and P-sites. The polypeptide is Small ribosomal subunit protein uS13 (Renibacterium salmoninarum (strain ATCC 33209 / DSM 20767 / JCM 11484 / NBRC 15589 / NCIMB 2235)).